A 345-amino-acid chain; its full sequence is Ribonucleoside-diphosphate reductase subunit beta (345 aa).

3 residues coordinate Fe cation: aspartate 88, glutamate 118, and histidine 121. Tyrosine 125 is a catalytic residue. 3 residues coordinate Fe cation: glutamate 185, glutamate 219, and histidine 222.

It belongs to the ribonucleoside diphosphate reductase small chain family. As to quaternary structure, tetramer of two alpha and two beta subunits. The cofactor is Fe cation.

The catalysed reaction is a 2'-deoxyribonucleoside 5'-diphosphate + [thioredoxin]-disulfide + H2O = a ribonucleoside 5'-diphosphate + [thioredoxin]-dithiol. Provides the precursors necessary for DNA synthesis. Catalyzes the biosynthesis of deoxyribonucleotides from the corresponding ribonucleotides. The sequence is that of Ribonucleoside-diphosphate reductase subunit beta (nrdB) from Halalkalibacterium halodurans (strain ATCC BAA-125 / DSM 18197 / FERM 7344 / JCM 9153 / C-125) (Bacillus halodurans).